The sequence spans 254 residues: Triosephosphate isomerase (254 aa).

12-14 (NWK) contacts substrate. Catalysis depends on His-99, which acts as the Electrophile. Glu-169 serves as the catalytic Proton acceptor. Substrate-binding positions include Gly-175, Ser-214, and 235 to 236 (GG).

Belongs to the triosephosphate isomerase family. In terms of assembly, homodimer.

The protein resides in the cytoplasm. It carries out the reaction D-glyceraldehyde 3-phosphate = dihydroxyacetone phosphate. Its pathway is carbohydrate biosynthesis; gluconeogenesis. It functions in the pathway carbohydrate degradation; glycolysis; D-glyceraldehyde 3-phosphate from glycerone phosphate: step 1/1. Functionally, involved in the gluconeogenesis. Catalyzes stereospecifically the conversion of dihydroxyacetone phosphate (DHAP) to D-glyceraldehyde-3-phosphate (G3P). This is Triosephosphate isomerase from Bartonella tribocorum (strain CIP 105476 / IBS 506).